The chain runs to 140 residues: MGMVSEFQQFAIRGNVIDLAVGVVIGAAFGKIVTALVEKIIMPPIGWAIGNVDFSRLAWVLKPAGVDATGKDIPAVAIGYGDFINTVVQFVIIAFAIFLLVKLINRVTNRKPDAPKGPSEEVLLLREIRDSLKNDTLKSG.

2 consecutive transmembrane segments (helical) span residues 16–36 (VIDLAVGVVIGAAFGKIVTAL) and 84–104 (INTVVQFVIIAFAIFLLVKLI).

It belongs to the MscL family. As to quaternary structure, homopentamer.

It localises to the cell inner membrane. Functionally, channel that opens in response to stretch forces in the membrane lipid bilayer. May participate in the regulation of osmotic pressure changes within the cell. This Xanthomonas oryzae pv. oryzae (strain MAFF 311018) protein is Large-conductance mechanosensitive channel.